Consider the following 337-residue polypeptide: Ketol-acid reductoisomerase (NADP(+)) (337 aa).

One can recognise a KARI N-terminal Rossmann domain in the interval 3–183 (VEMFYDDDAD…GGARAGVIKT (181 aa)). Residues 26 to 29 (YGSQ), Lys-49, Ser-52, Ser-54, and 84 to 87 (DTAQ) each bind NADP(+). His-109 is an active-site residue. Gly-135 contacts NADP(+). One can recognise a KARI C-terminal knotted domain in the interval 184–329 (TFKEETETDL…KKLRDLMSWV (146 aa)). Asp-192, Glu-196, Glu-228, and Glu-232 together coordinate Mg(2+). Ser-253 is a binding site for substrate.

This sequence belongs to the ketol-acid reductoisomerase family. It depends on Mg(2+) as a cofactor.

The catalysed reaction is (2R)-2,3-dihydroxy-3-methylbutanoate + NADP(+) = (2S)-2-acetolactate + NADPH + H(+). The enzyme catalyses (2R,3R)-2,3-dihydroxy-3-methylpentanoate + NADP(+) = (S)-2-ethyl-2-hydroxy-3-oxobutanoate + NADPH + H(+). Its pathway is amino-acid biosynthesis; L-isoleucine biosynthesis; L-isoleucine from 2-oxobutanoate: step 2/4. The protein operates within amino-acid biosynthesis; L-valine biosynthesis; L-valine from pyruvate: step 2/4. Involved in the biosynthesis of branched-chain amino acids (BCAA). Catalyzes an alkyl-migration followed by a ketol-acid reduction of (S)-2-acetolactate (S2AL) to yield (R)-2,3-dihydroxy-isovalerate. In the isomerase reaction, S2AL is rearranged via a Mg-dependent methyl migration to produce 3-hydroxy-3-methyl-2-ketobutyrate (HMKB). In the reductase reaction, this 2-ketoacid undergoes a metal-dependent reduction by NADPH to yield (R)-2,3-dihydroxy-isovalerate. The polypeptide is Ketol-acid reductoisomerase (NADP(+)) (Rhodococcus opacus (strain B4)).